Here is a 358-residue protein sequence, read N- to C-terminus: UDP-N-acetylglucosamine--N-acetylmuramyl-(pentapeptide) pyrophosphoryl-undecaprenol N-acetylglucosamine transferase (358 aa).

UDP-N-acetyl-alpha-D-glucosamine-binding positions include 13–15, Asn-125, Arg-161, Ser-189, Ile-244, and Gln-288; that span reads TGG.

Belongs to the glycosyltransferase 28 family. MurG subfamily.

It is found in the cell membrane. The catalysed reaction is di-trans,octa-cis-undecaprenyl diphospho-N-acetyl-alpha-D-muramoyl-L-alanyl-D-glutamyl-meso-2,6-diaminopimeloyl-D-alanyl-D-alanine + UDP-N-acetyl-alpha-D-glucosamine = di-trans,octa-cis-undecaprenyl diphospho-[N-acetyl-alpha-D-glucosaminyl-(1-&gt;4)]-N-acetyl-alpha-D-muramoyl-L-alanyl-D-glutamyl-meso-2,6-diaminopimeloyl-D-alanyl-D-alanine + UDP + H(+). It functions in the pathway cell wall biogenesis; peptidoglycan biosynthesis. Functionally, cell wall formation. Catalyzes the transfer of a GlcNAc subunit on undecaprenyl-pyrophosphoryl-MurNAc-pentapeptide (lipid intermediate I) to form undecaprenyl-pyrophosphoryl-MurNAc-(pentapeptide)GlcNAc (lipid intermediate II). In Baumannia cicadellinicola subsp. Homalodisca coagulata, this protein is UDP-N-acetylglucosamine--N-acetylmuramyl-(pentapeptide) pyrophosphoryl-undecaprenol N-acetylglucosamine transferase.